Here is a 299-residue protein sequence, read N- to C-terminus: Inosose dehydratase (299 aa).

It belongs to the IolE/MocC family. Requires glutathione as cofactor. It depends on Co(2+) as a cofactor. The cofactor is Mn(2+).

It carries out the reaction scyllo-inosose = 3D-3,5/4-trihydroxycyclohexane-1,2-dione + H2O. Functionally, catalyzes the dehydration of inosose (2-keto-myo-inositol, 2KMI or 2,4,6/3,5-pentahydroxycyclohexanone) to 3D-(3,5/4)-trihydroxycyclohexane-1,2-dione (D-2,3-diketo-4-deoxy-epi-inositol). This Klebsiella pneumoniae subsp. pneumoniae (strain ATCC 700721 / MGH 78578) protein is Inosose dehydratase.